Here is a 151-residue protein sequence, read N- to C-terminus: Pollen allergen Sal k 5.0101 (151 aa).

Intrachain disulfides connect Cys-17-Cys-88, Cys-20-Cys-132, and Cys-41-Cys-76. Asn-43 carries N-linked (GlcNAc...) asparagine glycosylation.

Belongs to the Ole e I family. N-glycosylated. Contains fucose monosaccharides in the glycan structure. Expressed in pollen (at protein level).

The protein localises to the secreted. The polypeptide is Pollen allergen Sal k 5.0101 (Kali turgidum (Prickly saltwort)).